The primary structure comprises 148 residues: Large ribosomal subunit protein bL9 (148 aa).

Belongs to the bacterial ribosomal protein bL9 family.

Its function is as follows. Binds to the 23S rRNA. The sequence is that of Large ribosomal subunit protein bL9 from Oceanobacillus iheyensis (strain DSM 14371 / CIP 107618 / JCM 11309 / KCTC 3954 / HTE831).